The following is a 1516-amino-acid chain: Alpha-2-macroglobulin homolog (1516 aa).

The signal sequence occupies residues 1–26; that stretch reads MSNLRRFSRSLAVAALVLLPFAAVQA.

Belongs to the protease inhibitor I39 (alpha-2-macroglobulin) family. Bacterial alpha-2-macroglobulin subfamily.

The polypeptide is Alpha-2-macroglobulin homolog (Pseudomonas aeruginosa (strain ATCC 15692 / DSM 22644 / CIP 104116 / JCM 14847 / LMG 12228 / 1C / PRS 101 / PAO1)).